The following is a 425-amino-acid chain: Serine--tRNA ligase (425 aa).

232–234 (TSE) is a binding site for L-serine. Residues 263–265 (RRE) and Val279 contribute to the ATP site. Glu286 contacts L-serine. 350-353 (EVVS) lines the ATP pocket. L-serine is bound at residue Thr387.

It belongs to the class-II aminoacyl-tRNA synthetase family. Type-1 seryl-tRNA synthetase subfamily. Homodimer. The tRNA molecule binds across the dimer.

Its subcellular location is the cytoplasm. It carries out the reaction tRNA(Ser) + L-serine + ATP = L-seryl-tRNA(Ser) + AMP + diphosphate + H(+). It catalyses the reaction tRNA(Sec) + L-serine + ATP = L-seryl-tRNA(Sec) + AMP + diphosphate + H(+). It functions in the pathway aminoacyl-tRNA biosynthesis; selenocysteinyl-tRNA(Sec) biosynthesis; L-seryl-tRNA(Sec) from L-serine and tRNA(Sec): step 1/1. In terms of biological role, catalyzes the attachment of serine to tRNA(Ser). Is also able to aminoacylate tRNA(Sec) with serine, to form the misacylated tRNA L-seryl-tRNA(Sec), which will be further converted into selenocysteinyl-tRNA(Sec). This chain is Serine--tRNA ligase, found in Methanoregula boonei (strain DSM 21154 / JCM 14090 / 6A8).